Here is a 280-residue protein sequence, read N- to C-terminus: MLPLIKQEDIKPEPDFTIQYRNKIIDTAGCIVISDSEEEQGEEVETRGATASSPSTGSGTPRVTSPTHPLSQMNHPPLPDPLGRPDEDSSSSSSSCSSASDSESESEEMKCSSGGGASVTSSHHGRGGFGGAASSSLLSCGHQSSGGASTGPRKKKSKRISELDNEKVRNIMKDKNTPFCTPNVQTRRGRVKIDEVSRMFRNTNRSLEYKNLPFTIPSMHQVLDEAIKACKTMQVNNKGIQIIYTRNHEVKSEVDAVRCRLGTMCTWPSPLPSSWSTPCP.

A disordered region spans residues 36-164 (SEEEQGEEVE…KKSKRISELD (129 aa)). Composition is skewed to low complexity over residues 47 to 67 (RGAT…TSPT), 90 to 101 (SSSSSSCSSASD), and 132 to 147 (AASS…SSGG).

Activates the E1.7 promoter. This activation is augmented by the IE1 protein. It down-regulates the transcription of genes under the control of the major IE promoter. The sequence is that of 30 kDa immediate-early protein 2 (UL122) from Human cytomegalovirus (strain Towne) (HHV-5).